The chain runs to 85 residues: Sec-independent protein translocase protein TatA (85 aa).

A helical transmembrane segment spans residues 7–27 (VFGSLGWTEILLILFIALLLF). Residues 50–85 (LTGESDDSSQQISQEQERSVPKEETKTSKSKKSKSA) are disordered. Residues 64–76 (EQERSVPKEETKT) show a composition bias toward basic and acidic residues.

This sequence belongs to the TatA/E family. Forms a complex with TatC.

The protein localises to the cell inner membrane. Part of the twin-arginine translocation (Tat) system that transports large folded proteins containing a characteristic twin-arginine motif in their signal peptide across membranes. TatA could form the protein-conducting channel of the Tat system. In Leptospira interrogans serogroup Icterohaemorrhagiae serovar Lai (strain 56601), this protein is Sec-independent protein translocase protein TatA.